The following is a 198-amino-acid chain: dITP/XTP pyrophosphatase (198 aa).

10-15 provides a ligand contact to substrate; the sequence is SGSDHK. Residues Glu-43 and Asp-72 each contribute to the Mg(2+) site. Asp-72 (proton acceptor) is an active-site residue. Substrate-binding positions include Ser-73, 154–157, Lys-177, and 182–183; these read FGYD and HR.

This sequence belongs to the HAM1 NTPase family. Homodimer. Requires Mg(2+) as cofactor.

It carries out the reaction XTP + H2O = XMP + diphosphate + H(+). The enzyme catalyses dITP + H2O = dIMP + diphosphate + H(+). It catalyses the reaction ITP + H2O = IMP + diphosphate + H(+). Its function is as follows. Pyrophosphatase that catalyzes the hydrolysis of nucleoside triphosphates to their monophosphate derivatives, with a high preference for the non-canonical purine nucleotides XTP (xanthosine triphosphate), dITP (deoxyinosine triphosphate) and ITP. Seems to function as a house-cleaning enzyme that removes non-canonical purine nucleotides from the nucleotide pool, thus preventing their incorporation into DNA/RNA and avoiding chromosomal lesions. This Leptospira biflexa serovar Patoc (strain Patoc 1 / Ames) protein is dITP/XTP pyrophosphatase.